Consider the following 102-residue polypeptide: RNA-binding protein Hfq (102 aa).

Positions 9–68 (DPFLNALRRERVPVSIYLVNGIKLQGQIESFDQFVILLKNTVSQMVYKHAISTVVPSRPV) constitute a Sm domain. The interval 63-102 (VPSRPVSHHSNNAGGGTSSNYHHGSSPQNTSAQQDSEETE) is disordered. Residues 70-96 (HHSNNAGGGTSSNYHHGSSPQNTSAQQ) are compositionally biased toward polar residues.

This sequence belongs to the Hfq family. As to quaternary structure, homohexamer.

RNA chaperone that binds small regulatory RNA (sRNAs) and mRNAs to facilitate mRNA translational regulation in response to envelope stress, environmental stress and changes in metabolite concentrations. Also binds with high specificity to tRNAs. In Shigella dysenteriae serotype 1 (strain Sd197), this protein is RNA-binding protein Hfq.